Consider the following 198-residue polypeptide: Auxin-binding protein 1 (198 aa).

Residues 1–33 form the signal peptide; it reads MIVLSVGSASSSPIVVVFSVALLLFYFSETSLG. Cysteines 36 and 189 form a disulfide. Residues histidine 92, histidine 94, and glutamate 98 each contribute to the Zn(2+) site. An N-linked (GlcNAc...) asparagine glycan is attached at asparagine 130. Histidine 141 lines the Zn(2+) pocket. A Prevents secretion from ER motif is present at residues 195–198; sequence KDEL.

As to quaternary structure, homodimer. May interact with the GPI-anchored plasma membrane protein SKU5 and its family members. Interacts with TMK1 (via extracellular domain). In terms of processing, glycosylated. Ubiquitinated by RMA2, leading to proteasomal degradation.

The protein resides in the endoplasmic reticulum lumen. Its subcellular location is the cell membrane. Auxin receptor that controls cell elongation and cell division. Involved in embryonic morphogenesis. Acts on the cell cycle, endocycle, cell plate formation, and cell expansion and contributes to the control of auxin-related gene expression. Controls root meristem size and mediates auxin responsiveness. Involved in activation of ROP GTPases in response to auxin and regulation of clathrin-mediated endocytosis in roots. Acts as a positive factor in clathrin recruitment to the plasma membrane, thereby promoting endocytosis. Upon auxin binding, restricts the internalization of PIN proteins by inhibiting clathrin-mediated endocytosis. Promotes auxin-triggered phosphorylation status modulation of RAF-like kinases (e.g. RAF20 and RAF24). Involved in the regulation of polar auxin transport. Behaves as a negative regulator of the SCF(TIR1/AFB) signaling pathway, protecting AUX/IAA repressors from degradation. Regulates the expression of cell wall remodeling genes via an SCF(TIR1/AFB)-dependent pathway. Involved in the modulation of hemicellulose xyloglucan structure. Required for rapid auxin-mediated re-orientation of microtubules to regulate cell elongation in roots and dark-grown hypocotyls as well as asymmetric growth during gravitropic responses. Involved in the shade avoidance response. Forms with TMK1 a cell surface auxin perception complex that activates ROP signaling pathways. ABP1 sensing of auxin is important for the ABP1-TMK1 complex formation. Interacts functionally with phytochrome to regulate growth. The sequence is that of Auxin-binding protein 1 from Arabidopsis thaliana (Mouse-ear cress).